A 137-amino-acid polypeptide reads, in one-letter code: Small heat shock protein IbpA (137 aa).

The region spanning 28–137 (SQSNGGYPPY…ANKPRRIEIN (110 aa)) is the sHSP domain.

Belongs to the small heat shock protein (HSP20) family. As to quaternary structure, monomer. Forms homomultimers of about 100-150 subunits at optimal growth temperatures. Conformation changes to monomers at high temperatures or high ionic concentrations.

It is found in the cytoplasm. Functionally, associates with aggregated proteins, together with IbpB, to stabilize and protect them from irreversible denaturation and extensive proteolysis during heat shock and oxidative stress. Aggregated proteins bound to the IbpAB complex are more efficiently refolded and reactivated by the ATP-dependent chaperone systems ClpB and DnaK/DnaJ/GrpE. Its activity is ATP-independent. The chain is Small heat shock protein IbpA from Klebsiella pneumoniae (strain 342).